The primary structure comprises 383 residues: Serine protease 23 (383 aa).

Residues 1-19 (MAGIPGLLFLLFFLLCAVG) form the signal peptide. N-linked (GlcNAc...) asparagine glycosylation is present at asparagine 93. Serine 109 is modified (phosphoserine; by FAM20C). Cysteine 160 and cysteine 176 are joined by a disulfide. Catalysis depends on histidine 175, which acts as the Charge relay system. An N-linked (GlcNAc...) asparagine glycan is attached at asparagine 207. Residues aspartate 240 and serine 316 each act as charge relay system in the active site.

It belongs to the peptidase S1 family.

Its subcellular location is the secreted. This Homo sapiens (Human) protein is Serine protease 23 (PRSS23).